The primary structure comprises 372 residues: DNA primase small subunit PriS (372 aa).

Residues Asp-95, Asp-97, and Asp-280 contribute to the active site.

The protein belongs to the eukaryotic-type primase small subunit family. In terms of assembly, heterodimer of a small subunit (PriS) and a large subunit (PriL). Requires Mg(2+) as cofactor. The cofactor is Mn(2+).

Catalytic subunit of DNA primase, an RNA polymerase that catalyzes the synthesis of short RNA molecules used as primers for DNA polymerase during DNA replication. The small subunit contains the primase catalytic core and has DNA synthesis activity on its own. Binding to the large subunit stabilizes and modulates the activity, increasing the rate of DNA synthesis while decreasing the length of the DNA fragments, and conferring RNA synthesis capability. The DNA polymerase activity may enable DNA primase to also catalyze primer extension after primer synthesis. May also play a role in DNA repair. The sequence is that of DNA primase small subunit PriS from Cenarchaeum symbiosum (strain A).